A 468-amino-acid chain; its full sequence is RUS family member 1 (468 aa).

Alanine 2 bears the N-acetylalanine mark. Position 49 is a phosphothreonine (threonine 49). The helical transmembrane segment at 247 to 267 (LLMLPLVSGCPGFSLGCFFFL) threads the bilayer.

This sequence belongs to the RUS1 family.

The protein resides in the membrane. The protein is RUS family member 1 (Rusf1) of Pongo abelii (Sumatran orangutan).